We begin with the raw amino-acid sequence, 98 residues long: Large ribosomal subunit protein uL23 (98 aa).

It belongs to the universal ribosomal protein uL23 family. Part of the 50S ribosomal subunit. Contacts protein L29, and trigger factor when it is bound to the ribosome.

Its function is as follows. One of the early assembly proteins it binds 23S rRNA. One of the proteins that surrounds the polypeptide exit tunnel on the outside of the ribosome. Forms the main docking site for trigger factor binding to the ribosome. The chain is Large ribosomal subunit protein uL23 from Halorhodospira halophila (strain DSM 244 / SL1) (Ectothiorhodospira halophila (strain DSM 244 / SL1)).